Reading from the N-terminus, the 398-residue chain is Phosphoglycerate kinase (398 aa).

Residues 23-25, R38, 61-64, R120, and R153 each bind substrate; these read DLN and HFGR. ATP is bound by residues K203, E325, and 355 to 358; that span reads GGDT.

Belongs to the phosphoglycerate kinase family. As to quaternary structure, monomer.

It is found in the cytoplasm. The enzyme catalyses (2R)-3-phosphoglycerate + ATP = (2R)-3-phospho-glyceroyl phosphate + ADP. The protein operates within carbohydrate degradation; glycolysis; pyruvate from D-glyceraldehyde 3-phosphate: step 2/5. The chain is Phosphoglycerate kinase from Chelativorans sp. (strain BNC1).